A 321-amino-acid polypeptide reads, in one-letter code: Proline-rich protein 2 (321 aa).

Residues 1–26 (MRILPKSGGGALCLLFVFALCSVAHS) form the signal peptide. Tandem repeats lie at residues 168-172 (PPLNL), 173-176 (PPLT), 177-181 (FPKIK), 185-189 (PPIYK), 190-194 (PPVVI), 198-202 (PCPPK), 207-211 (PIYKP), 212-217 (PVPIYK), 218-223 (PPVPIY), 225-229 (PPVVI), 234-238 (CPPKI), 240-244 (KPIYK), 245-251 (PPVPIYK), 252-256 (PPVVI), 262-266 (PPLHK), 267-271 (PIYKH), 272-276 (PVPIY), 277-281 (KPIFK), 282-286 (PPVVV), 288-292 (PKKPC), 293-297 (PPLPK), 298-302 (FPHFP), 303-307 (PKYIP), and 315-319 (PPFPS). The 24 X 5 AA approximate repeats stretch occupies residues 168 to 319 (PPLNLPPLTF…KFGKWPPFPS (152 aa)).

Belongs to the plant proline-rich protein superfamily. As to expression, mostly expressed in aerial organs, particularly in expanding leaves, stems, flowers, and siliques.

It localises to the secreted. The protein localises to the cell wall. This Arabidopsis thaliana (Mouse-ear cress) protein is Proline-rich protein 2 (PRP2).